Here is a 218-residue protein sequence, read N- to C-terminus: Grancalcin (218 aa).

EF-hand domains follow at residues 49 to 84, 85 to 119, 120 to 155, and 156 to 191; these read SSAGDSVYTYFSAVAGQDGEVDAEELQRCLTQSGIS, GTYSPFSLETCRIMIAMLDRDYTGKMGFNAFKELW, SALNAWKENFMTVDQDGSGTVEHHELRQAIGLMGYR, and LSPQTLTTIVKRYSKNGRIFFDDYVACCVKLRALTD. 9 residues coordinate Ca(2+): D103, D105, T107, K109, D133, D135, S137, T139, and E144.

As to quaternary structure, homodimer. Interacts with SRI and LCP1.

The protein localises to the cytoplasm. The protein resides in the cytoplasmic granule membrane. Its function is as follows. Calcium-binding protein that may play a role in the adhesion of neutrophils to fibronectin. May play a role in the formation of focal adhesions. The polypeptide is Grancalcin (GCA) (Pongo abelii (Sumatran orangutan)).